The primary structure comprises 346 residues: Phosphate acyltransferase (346 aa).

Belongs to the PlsX family. Homodimer. Probably interacts with PlsY.

It localises to the cytoplasm. The catalysed reaction is a fatty acyl-[ACP] + phosphate = an acyl phosphate + holo-[ACP]. It participates in lipid metabolism; phospholipid metabolism. Functionally, catalyzes the reversible formation of acyl-phosphate (acyl-PO(4)) from acyl-[acyl-carrier-protein] (acyl-ACP). This enzyme utilizes acyl-ACP as fatty acyl donor, but not acyl-CoA. The polypeptide is Phosphate acyltransferase (Delftia acidovorans (strain DSM 14801 / SPH-1)).